A 441-amino-acid polypeptide reads, in one-letter code: Protein translocase subunit SecY (441 aa).

The next 10 helical transmembrane spans lie at 18-38, 78-98, 124-144, 157-177, 180-200, 215-235, 272-292, 318-338, 382-402, and 403-423; these read ILFTLGIVILYRVGAALPSPG, AVGVMPYITASIIVQLLTVVI, IALAILQATSIVALAANGGLL, IFTLVVIVLVMTGGAALVMWM, LITERGIGNGMSLLIFVGIAA, GVVFTAVCAAALIIIVGVVFV, VIPVIFASSLIYIPHLITQLI, LVYIGIYFGLIIFFTYFYVSI, IYLGVIAVLPNLFLQIGAGGT, and VQNLPFGGTAVLIMIGVGLDT.

It belongs to the SecY/SEC61-alpha family. Component of the Sec protein translocase complex. Heterotrimer consisting of SecY, SecE and SecG subunits. The heterotrimers can form oligomers, although 1 heterotrimer is thought to be able to translocate proteins. Interacts with the ribosome. Interacts with SecDF, and other proteins may be involved. Interacts with SecA.

The protein resides in the cell membrane. The central subunit of the protein translocation channel SecYEG. Consists of two halves formed by TMs 1-5 and 6-10. These two domains form a lateral gate at the front which open onto the bilayer between TMs 2 and 7, and are clamped together by SecE at the back. The channel is closed by both a pore ring composed of hydrophobic SecY resides and a short helix (helix 2A) on the extracellular side of the membrane which forms a plug. The plug probably moves laterally to allow the channel to open. The ring and the pore may move independently. The polypeptide is Protein translocase subunit SecY (Mycobacterium bovis (strain ATCC BAA-935 / AF2122/97)).